Reading from the N-terminus, the 171-residue chain is Transcription factor E (171 aa).

The region spanning 5-88 is the HTH TFE/IIEalpha-type domain; sequence YEDPFIRIAV…RWRSRREEVE (84 aa).

It belongs to the TFE family. As to quaternary structure, monomer. Interaction with RNA polymerase subunits RpoF and RpoE is necessary for Tfe stimulatory transcription activity. Able to interact with Tbp and RNA polymerase in the absence of DNA promoter. Interacts both with the preinitiation and elongation complexes.

In terms of biological role, transcription factor that plays a role in the activation of archaeal genes transcribed by RNA polymerase. Facilitates transcription initiation by enhancing TATA-box recognition by TATA-box-binding protein (Tbp), and transcription factor B (Tfb) and RNA polymerase recruitment. Not absolutely required for transcription in vitro, but particularly important in cases where Tbp or Tfb function is not optimal. It dynamically alters the nucleic acid-binding properties of RNA polymerases by stabilizing the initiation complex and destabilizing elongation complexes. Seems to translocate with the RNA polymerase following initiation and acts by binding to the non template strand of the transcription bubble in elongation complexes. The chain is Transcription factor E from Cenarchaeum symbiosum (strain A).